Consider the following 131-residue polypeptide: Ribosome-binding factor A (131 aa).

This sequence belongs to the RbfA family. Monomer. Binds 30S ribosomal subunits, but not 50S ribosomal subunits or 70S ribosomes.

It localises to the cytoplasm. Functionally, one of several proteins that assist in the late maturation steps of the functional core of the 30S ribosomal subunit. Associates with free 30S ribosomal subunits (but not with 30S subunits that are part of 70S ribosomes or polysomes). Required for efficient processing of 16S rRNA. May interact with the 5'-terminal helix region of 16S rRNA. The chain is Ribosome-binding factor A from Chromohalobacter salexigens (strain ATCC BAA-138 / DSM 3043 / CIP 106854 / NCIMB 13768 / 1H11).